The primary structure comprises 638 residues: Poly(A)-specific ribonuclease PARN (638 aa).

A divalent metal cation-binding residues include Asp28 and Glu30. A disordered region spans residues 143–165 (REQYDEKRSQSNGAGALSYTSPN). Positions 152–165 (QSNGAGALSYTSPN) are enriched in polar residues. Phosphoserine is present on residues Ser163 and Ser167. The R3H domain occupies 178–245 (KKFIDQVVEK…ERYIVISKVD (68 aa)). Residue Lys220 is modified to N6-acetyllysine. The a divalent metal cation site is built by Asp292 and Asp382. Lys499 bears the N6-acetyllysine mark. Phosphoserine is present on Ser530. The residue at position 557 (Ser557) is a Phosphoserine; by MAPKAPK2. Positions 573-638 (RAEAGLEARA…AKLFEVPDTW (66 aa)) are disordered. Phosphoserine is present on residues Ser583 and Ser587. The segment covering 606–615 (KKAKKLKRMK) has biased composition (basic residues). Phosphoserine occurs at positions 619, 623, and 627.

It belongs to the CAF1 family. As to quaternary structure, homodimer. Found in a mRNA decay complex with RENT1, RENT2 and RENT3B. Interacts with KHSRP. Interacts with CELF1/CUGBP1. Interacts with ZC3HAV1 in an RNA-independent manner. Interacts with DHX36. Mg(2+) serves as cofactor. In terms of processing, phosphorylation by MAPKAPK2, preventing GADD45A mRNA degradation after genotoxic stress.

The protein localises to the nucleus. The protein resides in the cytoplasm. Its subcellular location is the nucleolus. The catalysed reaction is Exonucleolytic cleavage of poly(A) to 5'-AMP.. In terms of biological role, 3'-exoribonuclease that has a preference for poly(A) tails of mRNAs, thereby efficiently degrading poly(A) tails. Exonucleolytic degradation of the poly(A) tail is often the first step in the decay of eukaryotic mRNAs and is also used to silence certain maternal mRNAs translationally during oocyte maturation and early embryonic development. Involved in nonsense-mediated mRNA decay, a critical process of selective degradation of mRNAs that contain premature stop codons. Also involved in degradation of inherently unstable mRNAs that contain AU-rich elements (AREs) in their 3'-UTR, possibly via its interaction with KHSRP. Probably mediates the removal of poly(A) tails of AREs mRNAs, which constitutes the first step of destabilization. Interacts with both the 3'-end poly(A) tail and the 5'-end cap structure during degradation, the interaction with the cap structure being required for an efficient degradation of poly(A) tails. Also able to recognize poly(A) tails of microRNAs such as MIR21 and H/ACA box snoRNAs (small nucleolar RNAs) leading to microRNAs degradation or snoRNA increased stability. The chain is Poly(A)-specific ribonuclease PARN (PARN) from Bos taurus (Bovine).